A 234-amino-acid chain; its full sequence is Large ribosomal subunit protein uL1 (234 aa).

It belongs to the universal ribosomal protein uL1 family. Part of the 50S ribosomal subunit.

In terms of biological role, binds directly to 23S rRNA. The L1 stalk is quite mobile in the ribosome, and is involved in E site tRNA release. Its function is as follows. Protein L1 is also a translational repressor protein, it controls the translation of the L11 operon by binding to its mRNA. The protein is Large ribosomal subunit protein uL1 of Sodalis glossinidius (strain morsitans).